A 741-amino-acid chain; its full sequence is Protein ACCUMULATION AND REPLICATION OF CHLOROPLASTS 3, chloroplastic (741 aa).

Residues 1 to 41 (MPISMELPVFSTLRVPLFSRLALLPTFGVPFSSLGATTRLN) constitute a chloroplast transit peptide. Disordered regions lie at residues 444–465 (ENGDDSEYPLKEGEPSRNSRLD) and 539–558 (DSREESFFNPNGSTKDSSDT). Basic and acidic residues predominate over residues 451-465 (YPLKEGEPSRNSRLD). The segment covering 546-558 (FNPNGSTKDSSDT) has biased composition (polar residues). MORN repeat units lie at residues 612 to 628 (QGGLPEGKGRLVLGDGS), 630 to 652 (YDGMWHNGKRSGLGTFYFKNGDV), and 653 to 675 (FQGTWREDLIHGKGWFYFHKGDR).

Self-interacts. Interacts with FTSZ, CDP1/PARC6 (via N-terminus), MIND1 and MINE1. Part of a complex made of ARC3, ARC6, FTSZ1 and FTSZ2. Recruited to the middle of the plastid by CDP1/PARC6 where subsequent complex made of CDP1/PARC6, ARC3 and FtsZ proteins can form; this complex enhances the dynamics of Z rings during chloroplast division. Binding to FTSZ2-1 is enabled by ARC6.

It is found in the plastid. The protein resides in the chloroplast outer membrane. The protein localises to the chloroplast stroma. In terms of biological role, together with MIND1 and MCD1, regulates FtsZ ring positioning in chloroplasts in an ARC6-dependent manner. Z-ring accessory protein involved in the initiation of plastid division and division site placement (might functionally replace bacterial MinC). Acts as a disassembly factor that accelerates fragmentation and depolymerization of existing FtsZ2 filaments by enhancing FTSZ2 GTPase activity, thus leading to the conversion of FTSZ2 bound GTP into GDP, a process which triggers FtsZ2 filaments destabilization. Prevents misplaced Z-ring formation at chloroplast stroma nondivision sites. May control the rate of chloroplast expansion. Seems to influence stromule (stroma-filled tubular extensions of the plastid envelope membrane) length and frequency. In Arabidopsis thaliana (Mouse-ear cress), this protein is Protein ACCUMULATION AND REPLICATION OF CHLOROPLASTS 3, chloroplastic.